Consider the following 341-residue polypeptide: MASIATLGSHCSLQVLKGAKDEGLKTILVCEKKREKLYRRFPFIDELIIVDKFREVLDEKVQSTLEQNDAVLIPHGTLIAQMSSDEIESIKTPIFGNKWILRWESDREMKEKLMREATLPMPKPVTNPSEIEKLSIVKRQGAAGGKGYFMAANEDDYNTKRNQLISEGVISEDETLYIQEYAAGVLAYLTFFYSPLKEELEFYGVDQRHESDIEGLGRIPAEQQMKSNKVPSFNVIGNSPLVLRESLLDEVYTMGENFVEASKRIVAPGMNGPFCIEGVYDENAQFTSFEFSARIVAGSNIYMDGSPYYNLLFNETMSMGKRIAREVKTAAETNQLDKVTT.

2 residues coordinate 5-amino-1-(5-phospho-beta-D-ribosyl)imidazole-4-carboxamide: H10 and T77. Residues D106–M317 form the ATP-grasp domain. ATP-binding positions include E132–Y188 and E210. Position 238 (N238) interacts with 5-amino-1-(5-phospho-beta-D-ribosyl)imidazole-4-carboxamide. Residues E277 and E290 each contribute to the Mg(2+) site.

The protein belongs to the phosphohexose mutase family. Mg(2+) serves as cofactor. The cofactor is Mn(2+).

The enzyme catalyses 5-amino-1-(5-phospho-beta-D-ribosyl)imidazole-4-carboxamide + formate + ATP = 5-formamido-1-(5-phospho-D-ribosyl)imidazole-4-carboxamide + ADP + phosphate. It functions in the pathway purine metabolism; IMP biosynthesis via de novo pathway; 5-formamido-1-(5-phospho-D-ribosyl)imidazole-4-carboxamide from 5-amino-1-(5-phospho-D-ribosyl)imidazole-4-carboxamide (formate route): step 1/1. Catalyzes the ATP- and formate-dependent formylation of 5-aminoimidazole-4-carboxamide-1-beta-d-ribofuranosyl 5'-monophosphate (AICAR) to 5-formaminoimidazole-4-carboxamide-1-beta-d-ribofuranosyl 5'-monophosphate (FAICAR) in the absence of folates. This Nitrosopumilus maritimus (strain SCM1) protein is 5-formaminoimidazole-4-carboxamide-1-(beta)-D-ribofuranosyl 5'-monophosphate synthetase.